Consider the following 156-residue polypeptide: Small ribosomal subunit protein uS7c (156 aa).

The protein belongs to the universal ribosomal protein uS7 family. In terms of assembly, part of the 30S ribosomal subunit.

The protein resides in the plastid. Its function is as follows. One of the primary rRNA binding proteins, it binds directly to 16S rRNA where it nucleates assembly of the head domain of the 30S subunit. This Prototheca wickerhamii protein is Small ribosomal subunit protein uS7c (rps7).